Consider the following 420-residue polypeptide: Light-independent protochlorophyllide reductase subunit N (420 aa).

[4Fe-4S] cluster contacts are provided by cysteine 21, cysteine 46, and cysteine 103.

Belongs to the BchN/ChlN family. As to quaternary structure, protochlorophyllide reductase is composed of three subunits; BchL, BchN and BchB. Forms a heterotetramer of two BchB and two BchN subunits. Requires [4Fe-4S] cluster as cofactor.

It catalyses the reaction chlorophyllide a + oxidized 2[4Fe-4S]-[ferredoxin] + 2 ADP + 2 phosphate = protochlorophyllide a + reduced 2[4Fe-4S]-[ferredoxin] + 2 ATP + 2 H2O. Its pathway is porphyrin-containing compound metabolism; bacteriochlorophyll biosynthesis (light-independent). Component of the dark-operative protochlorophyllide reductase (DPOR) that uses Mg-ATP and reduced ferredoxin to reduce ring D of protochlorophyllide (Pchlide) to form chlorophyllide a (Chlide). This reaction is light-independent. The NB-protein (BchN-BchB) is the catalytic component of the complex. This is Light-independent protochlorophyllide reductase subunit N from Chlorobium luteolum (strain DSM 273 / BCRC 81028 / 2530) (Pelodictyon luteolum).